An 83-amino-acid polypeptide reads, in one-letter code: Exodeoxyribonuclease 7 small subunit (83 aa).

The protein belongs to the XseB family. In terms of assembly, heterooligomer composed of large and small subunits.

The protein localises to the cytoplasm. The catalysed reaction is Exonucleolytic cleavage in either 5'- to 3'- or 3'- to 5'-direction to yield nucleoside 5'-phosphates.. Bidirectionally degrades single-stranded DNA into large acid-insoluble oligonucleotides, which are then degraded further into small acid-soluble oligonucleotides. This is Exodeoxyribonuclease 7 small subunit from Bradyrhizobium sp. (strain ORS 278).